Reading from the N-terminus, the 492-residue chain is N-succinylglutamate 5-semialdehyde dehydrogenase (492 aa).

220-225 (GRANTG) is a binding site for NAD(+). Residues Glu-243 and Cys-277 contribute to the active site.

Belongs to the aldehyde dehydrogenase family. AstD subfamily.

The catalysed reaction is N-succinyl-L-glutamate 5-semialdehyde + NAD(+) + H2O = N-succinyl-L-glutamate + NADH + 2 H(+). It participates in amino-acid degradation; L-arginine degradation via AST pathway; L-glutamate and succinate from L-arginine: step 4/5. Its function is as follows. Catalyzes the NAD-dependent reduction of succinylglutamate semialdehyde into succinylglutamate. This is N-succinylglutamate 5-semialdehyde dehydrogenase from Shigella boydii serotype 18 (strain CDC 3083-94 / BS512).